Here is a 912-residue protein sequence, read N- to C-terminus: Brevican core protein (912 aa).

The signal sequence occupies residues 1–22 (MAPLFLPLLATLVLAWIPVALA). An Ig-like V-type domain is found at 36-155 (RVRIAGDAPL…SSDAVEVKVK (120 aa)). Cystine bridges form between Cys57–Cys137, Cys179–Cys250, Cys203–Cys224, Cys277–Cys352, and Cys301–Cys322. Asn130 is a glycosylation site (N-linked (GlcNAc...) asparagine). 2 consecutive Link domains span residues 157–252 (VVFL…YCYA) and 257–354 (GELF…YCFR). N-linked (GlcNAc...) asparagine glycosylation is present at Asn337. Disordered regions lie at residues 408 to 427 (IPII…PAEA) and 438 to 651 (SIVP…SGDC). Ser418 is subject to Phosphoserine. O-linked (Xyl...) (chondroitin sulfate) serine glycosylation is present at Ser418. A compositionally biased stretch (basic and acidic residues) spans 448-463 (EEGKVLEQEEKYRGEE). Residues 464 to 478 (EKEEEEEEEEVEDEA) are compositionally biased toward acidic residues. Residues 520–537 (VSPPPYDEPEAPRPPRVL) are compositionally biased toward pro residues. A compositionally biased stretch (basic and acidic residues) spans 603-617 (GDTRDLETPSEENSR). Residues 647–683 (SSGDCVPSPCHNGGTCLEEEEGVRCLCLPGYGGDLCD) enclose the EGF-like domain. 8 disulfides stabilise this stretch: Cys651/Cys662, Cys656/Cys671, Cys673/Cys682, Cys689/Cys700, Cys717/Cys809, Cys785/Cys801, Cys816/Cys859, and Cys845/Cys872. Residues 683–811 (DVGLHFCSPG…NYHLSYTCKM (129 aa)) form the C-type lectin domain. The Sushi domain maps to 814-874 (VSCGPPPELP…WGLPQISCVP (61 aa)).

The protein belongs to the aggrecan/versican proteoglycan family. Interacts with TNR. Post-translationally, O-glycosylated; contains chondroitin sulfate. In terms of tissue distribution, brain; expressed in cerebellar astrocytes but not in neurons.

It is found in the secreted. It localises to the extracellular space. Its subcellular location is the extracellular matrix. Its function is as follows. May play a role in the terminally differentiating and the adult nervous system during postnatal development. Could stabilize interactions between hyaluronan (HA) and brain proteoglycans. The polypeptide is Brevican core protein (BCAN) (Bos taurus (Bovine)).